Reading from the N-terminus, the 195-residue chain is Probable GTP-binding protein EngB (195 aa).

The EngB-type G domain occupies 24 to 195 (ELPEIALAGR…EAWDAILEKL (172 aa)). Residues 32 to 39 (GRSNVGKS), 59 to 63 (GKTQL), 77 to 80 (DVPG), 144 to 147 (TKAD), and 176 to 178 (FSS) contribute to the GTP site. The Mg(2+) site is built by Ser39 and Thr61.

It belongs to the TRAFAC class TrmE-Era-EngA-EngB-Septin-like GTPase superfamily. EngB GTPase family. Mg(2+) is required as a cofactor.

Functionally, necessary for normal cell division and for the maintenance of normal septation. The protein is Probable GTP-binding protein EngB of Streptococcus pneumoniae (strain ATCC 700669 / Spain 23F-1).